The sequence spans 339 residues: U11/U12 small nuclear ribonucleoprotein 48 kDa protein (339 aa).

The CHHC U11-48K-type zinc-finger motif lies at 55-82; sequence VVICPYDSNHHMPKSSLAKHMASCRLRK. Zn(2+) contacts are provided by Cys-58, His-64, His-74, and Cys-78. Residues Lys-87 and Lys-104 each participate in a glycyl lysine isopeptide (Lys-Gly) (interchain with G-Cter in SUMO2) cross-link. The tract at residues 255 to 339 is disordered; it reads HWQEEQEKAE…HSHKRRKQKI (85 aa). Over residues 294 to 309 the composition is skewed to basic residues; the sequence is RHRRDRSRSPHKRKRN. Over residues 310-328 the composition is skewed to basic and acidic residues; sequence KDKDKNCESRRRKERDGER. The segment covering 329 to 339 has biased composition (basic residues); sequence HHSHKRRKQKI.

Component of the U11/U12 snRNPs that are part of the U12-type spliceosome. Not found in the major spliceosome.

The protein resides in the nucleus. Functionally, likely involved in U12-type 5' splice site recognition. The polypeptide is U11/U12 small nuclear ribonucleoprotein 48 kDa protein (SNRNP48) (Homo sapiens (Human)).